The sequence spans 851 residues: MPGKLRSGAKLGSDGAEESMETLPKPSEKKTRKEKTKSKTEEATEGMEEAVSSKAKKTNKKGPSEDDVDPPKSRKAKKQEEEPQDDTASTSKTSKKKKEPLEKQADSETKEIITEEPSEEEADMPKPKKMKKGKEANGDAGEKSPKLKNGLSQPSEEEADIPKPKKMKKGKEANGDAGEKSPKLKNGLSQPSEEEVDIPKPKKMKKGKEASGDAGEKSPRLKDGLSQPSEPKSNSSDAPGEESSSETEKEIPVEQKEGAFSNFPISEETVKLLKARGVNFLFPIQAKTFHHVYSGKDLIAQARTGTGKTFSFAIPLIEKLQGGLQERKRGRAPQVLVLAPTRELANQVSKDFSDITKKLSVACFYGGTPYGGQIERMRSGIDILVGTPGRIKDHLQNGKLDLTKLKHVVLDEVDQMLDMGFADQVEEILCVAYKKDSEDNPQTLLFSATCPHWVFNVAKKYMKSTYEQVDLIGKKTQKAAITVEHLAIKCHWTERAAVIGDVIRVYSGHQGRTIIFCETKKDAQELSQNTCIKQDAQSLHGDIPQKQREITLKGFRNGNFGVLVATNVAARGLDIPEVDLVVQSCPPKDVESYIHRSGRTGRAGRTGVCICFYQNKEEYQLAQVEQKAGIKFKRIGVPSATEIIKASSKDAIRLLDSVPPTAISHFKQSAEKLIEEKGAVEALAAALAHISGATSVDQRSLINSQAGFVTMILRCSIEMPNISYAWKELKEQLGESIDAKVKGMVFLKGKLGVCFDVRTEAVTEIQEKWHDSRRWQLTVATEQPELEGPPDGYRGRMGQRDGSRGAFRGQRGGSRNFRGQGQRGGSRNFRGQRPGGGNRGQKRSFSKAFGQ.

Positions M1–F260 are disordered. Phosphoserine is present on residues S7 and S13. Composition is skewed to basic and acidic residues over residues P26–E42 and E99–I113. N6-acetyllysine is present on K39. 3 repeat units span residues P117 to Q153, P154 to Q190, and P191 to Q227. Residues P117–Q227 form a 3 X 37 AA tandem repeats region. S118 is subject to Phosphoserine. Over residues G133–P145 the composition is skewed to basic and acidic residues. An N6-acetyllysine modification is found at K134. Phosphoserine is present on residues S144, S155, S181, S192, S218, S236, S243, S244, and S245. Residues G170 to P182 are compositionally biased toward basic and acidic residues. Basic and acidic residues predominate over residues G207–D223. Residues S226–D237 show a composition bias toward polar residues. Positions E246–E257 are enriched in basic and acidic residues. Residues G258 to A286 carry the Q motif motif. In terms of domain architecture, Helicase ATP-binding spans F289–Q468. Residue A302–T309 participates in ATP binding. At T368 the chain carries Phosphothreonine. The DEAD box signature appears at D411–D414. The Helicase C-terminal domain maps to D501 to K645. The residue at position 639 (S639) is a Phosphoserine. N6-acetyllysine is present on K672. The tract at residues Q783–Q851 is disordered. 3 tandem repeats follow at residues F807 to R811, F817 to R823, and F829 to R833. The interval F807–R833 is 3 X 5 AA repeats. K847 carries the post-translational modification N6-acetyllysine.

The protein belongs to the DEAD box helicase family. DDX21/DDX50 subfamily. As to quaternary structure, homodimer; homodimerizes via its N-terminus. Found in a multi-helicase-TICAM1 complex at least composed of DHX36, DDX1, DDX21 and TICAM1; this complex exists in resting cells with or without poly(I:C) RNA ligand stimulation. Interacts (via C-terminus) with TICAM1 (via TIR domain). Interacts with DHX36 (via C-terminus); this interaction serves as bridges to TICAM1. Interacts (via C-terminus) with DDX1 (via B30.2/SPRY domain); this interaction serves as bridges to TICAM1. Component of the B-WICH complex, at least composed of SMARCA5/SNF2H, BAZ1B/WSTF, SF3B1, DEK, MYO1C, ERCC6, MYBBP1A and DDX21. Interacts with C1QBP. Interacts with JUN. Interacts with WDR46. Interacts with MCM3AP. Interacts with WDR43. Interacts with KPNA3. Interacts with GID4. Acetylation by CREBBP/CBP inhibits the helicase activity. Deacetylation by SIRT7 promotes the helicase activity and overcomes R-loop-mediated stalling of RNA polymerases. As to expression, highly expressed in liver and testis. Expressed at lower level in brain, lungs, and skeletal muscle.

It localises to the nucleus. It is found in the nucleolus. The protein resides in the nucleoplasm. The protein localises to the cytoplasm. Its subcellular location is the cytosol. It localises to the mitochondrion. The enzyme catalyses ATP + H2O = ADP + phosphate + H(+). Its activity is regulated as follows. Acetylation inhibits the helicase activity. Its function is as follows. RNA helicase that acts as a sensor of the transcriptional status of both RNA polymerase (Pol) I and II: promotes ribosomal RNA (rRNA) processing and transcription from polymerase II (Pol II). Binds various RNAs, such as rRNAs, snoRNAs, 7SK and, at lower extent, mRNAs. In the nucleolus, localizes to rDNA locus, where it directly binds rRNAs and snoRNAs, and promotes rRNA transcription, processing and modification. Required for rRNA 2'-O-methylation, possibly by promoting the recruitment of late-acting snoRNAs SNORD56 and SNORD58 with pre-ribosomal complexes. In the nucleoplasm, binds 7SK RNA and is recruited to the promoters of Pol II-transcribed genes: acts by facilitating the release of P-TEFb from inhibitory 7SK snRNP in a manner that is dependent on its helicase activity, thereby promoting transcription of its target genes. Functions as cofactor for JUN-activated transcription: required for phosphorylation of JUN at 'Ser-77'. Can unwind double-stranded RNA (helicase) and can fold or introduce a secondary structure to a single-stranded RNA (foldase). Together with SIRT7, required to prevent R-loop-associated DNA damage and transcription-associated genomic instability: deacetylation by SIRT7 activates the helicase activity, thereby overcoming R-loop-mediated stalling of RNA polymerases. Involved in rRNA processing. May bind to specific miRNA hairpins. Component of a multi-helicase-TICAM1 complex that acts as a cytoplasmic sensor of viral double-stranded RNA (dsRNA) and plays a role in the activation of a cascade of antiviral responses including the induction of pro-inflammatory cytokines via the adapter molecule TICAM1. The chain is Nucleolar RNA helicase 2 (Ddx21) from Mus musculus (Mouse).